We begin with the raw amino-acid sequence, 213 residues long: High frequency lysogenization protein HflD homolog (213 aa).

This sequence belongs to the HflD family.

The protein resides in the cytoplasm. It is found in the cell inner membrane. In Klebsiella pneumoniae (strain 342), this protein is High frequency lysogenization protein HflD homolog.